Consider the following 200-residue polypeptide: 3-isopropylmalate dehydratase small subunit (200 aa).

The protein belongs to the LeuD family. LeuD type 1 subfamily. Heterodimer of LeuC and LeuD.

The enzyme catalyses (2R,3S)-3-isopropylmalate = (2S)-2-isopropylmalate. It participates in amino-acid biosynthesis; L-leucine biosynthesis; L-leucine from 3-methyl-2-oxobutanoate: step 2/4. Functionally, catalyzes the isomerization between 2-isopropylmalate and 3-isopropylmalate, via the formation of 2-isopropylmaleate. This chain is 3-isopropylmalate dehydratase small subunit, found in Yersinia pestis bv. Antiqua (strain Antiqua).